A 922-amino-acid polypeptide reads, in one-letter code: Golgi-associated RAB2 interactor protein 5B (922 aa).

Disordered stretches follow at residues Asp244 to His264, Gln292 to His317, Thr373 to Ser404, Ala424 to Thr597, Gln758 to Ser830, and Ala842 to Val869. Positions Gln292 to Ala305 are enriched in polar residues. The span at Lys431 to Lys441 shows a compositional bias: pro residues. Low complexity-rich tracts occupy residues Ala442–Pro458 and Lys471–Val495. The span at Pro496–Gln507 shows a compositional bias: pro residues. Positions Gln758 to Trp788 are enriched in basic and acidic residues.

It belongs to the GARIN family.

In Homo sapiens (Human), this protein is Golgi-associated RAB2 interactor protein 5B.